The chain runs to 157 residues: Large ribosomal subunit protein uL15 (157 aa).

The interval 1–56 is disordered; sequence MRLEDIRPQPGSTRRRRRLGRGIAAGQGASCGKGMRGQKARKGGGPRPGFEGGQTP. The segment covering 23-35 has biased composition (gly residues); the sequence is IAAGQGASCGKGM.

This sequence belongs to the universal ribosomal protein uL15 family. Part of the 50S ribosomal subunit.

Its function is as follows. Binds to the 23S rRNA. This is Large ribosomal subunit protein uL15 from Synechococcus sp. (strain JA-3-3Ab) (Cyanobacteria bacterium Yellowstone A-Prime).